Here is a 56-residue protein sequence, read N- to C-terminus: Large ribosomal subunit protein bL32B (56 aa).

A compositionally biased stretch (basic residues) spans 1-19 (MAVPKRRMSRSNTRHRRAQ). A disordered region spans residues 1-22 (MAVPKRRMSRSNTRHRRAQWKA).

The protein belongs to the bacterial ribosomal protein bL32 family.

This chain is Large ribosomal subunit protein bL32B (rpmF2), found in Streptomyces coelicolor (strain ATCC BAA-471 / A3(2) / M145).